The sequence spans 396 residues: 1-deoxy-D-xylulose 5-phosphate reductoisomerase (396 aa).

Positions 13, 14, 15, 16, and 127 each coordinate NADPH. Residue Lys128 participates in 1-deoxy-D-xylulose 5-phosphate binding. Glu129 lines the NADPH pocket. Residue Asp153 coordinates Mn(2+). Ser154, Glu155, Ser184, and His207 together coordinate 1-deoxy-D-xylulose 5-phosphate. Glu155 provides a ligand contact to Mn(2+). An NADPH-binding site is contributed by Gly213. Residues Ser220, Asn225, Lys226, and Glu229 each coordinate 1-deoxy-D-xylulose 5-phosphate. Residue Glu229 coordinates Mn(2+).

This sequence belongs to the DXR family. It depends on Mg(2+) as a cofactor. The cofactor is Mn(2+).

It carries out the reaction 2-C-methyl-D-erythritol 4-phosphate + NADP(+) = 1-deoxy-D-xylulose 5-phosphate + NADPH + H(+). It functions in the pathway isoprenoid biosynthesis; isopentenyl diphosphate biosynthesis via DXP pathway; isopentenyl diphosphate from 1-deoxy-D-xylulose 5-phosphate: step 1/6. Catalyzes the NADPH-dependent rearrangement and reduction of 1-deoxy-D-xylulose-5-phosphate (DXP) to 2-C-methyl-D-erythritol 4-phosphate (MEP). The chain is 1-deoxy-D-xylulose 5-phosphate reductoisomerase from Stutzerimonas stutzeri (strain A1501) (Pseudomonas stutzeri).